A 261-amino-acid chain; its full sequence is Cytochrome c oxidase subunit 3 (261 aa).

The Mitochondrial matrix portion of the chain corresponds to 1-15 (MTHQSHAYHMVKPSP). The helical transmembrane segment at 16-34 (WPLTGALSALLMTSGLAMW) threads the bilayer. The Mitochondrial intermembrane segment spans residues 35–40 (FHFYST). A helical transmembrane segment spans residues 41-66 (TLLTLGLLTNTLTMYQWWRDVMREGT). The Mitochondrial matrix portion of the chain corresponds to 67–72 (YQGHHT). A helical transmembrane segment spans residues 73 to 105 (PPVQKGLRYGMILFITSEVFFFAGFFWAFYHSS). Over 106-128 (LAPTPQLGGHWPPTGITPLNPLE) the chain is Mitochondrial intermembrane. A helical transmembrane segment spans residues 129–152 (VPLLNTSVLLASGVSITWAHHSLM). Topologically, residues 153-155 (ENN) are mitochondrial matrix. Residues 156–183 (RNQMIQALLITILLGLYFTLLQASEYFE) form a helical membrane-spanning segment. Over 184–190 (SPFTISD) the chain is Mitochondrial intermembrane. A helical membrane pass occupies residues 191 to 223 (GIYGSTFFVATGFHGLHVIIGSTFLTICLIRQL). Residues 224–232 (MFHFTSKHH) lie on the Mitochondrial matrix side of the membrane. Residues 233–256 (FGFQAAAWYWHFVDVVWLFLYVSI) traverse the membrane as a helical segment. Topologically, residues 257–261 (YWWGS) are mitochondrial intermembrane.

The protein belongs to the cytochrome c oxidase subunit 3 family. In terms of assembly, component of the cytochrome c oxidase (complex IV, CIV), a multisubunit enzyme composed of 14 subunits. The complex is composed of a catalytic core of 3 subunits MT-CO1, MT-CO2 and MT-CO3, encoded in the mitochondrial DNA, and 11 supernumerary subunits COX4I, COX5A, COX5B, COX6A, COX6B, COX6C, COX7A, COX7B, COX7C, COX8 and NDUFA4, which are encoded in the nuclear genome. The complex exists as a monomer or a dimer and forms supercomplexes (SCs) in the inner mitochondrial membrane with NADH-ubiquinone oxidoreductase (complex I, CI) and ubiquinol-cytochrome c oxidoreductase (cytochrome b-c1 complex, complex III, CIII), resulting in different assemblies (supercomplex SCI(1)III(2)IV(1) and megacomplex MCI(2)III(2)IV(2)).

Its subcellular location is the mitochondrion inner membrane. It catalyses the reaction 4 Fe(II)-[cytochrome c] + O2 + 8 H(+)(in) = 4 Fe(III)-[cytochrome c] + 2 H2O + 4 H(+)(out). Component of the cytochrome c oxidase, the last enzyme in the mitochondrial electron transport chain which drives oxidative phosphorylation. The respiratory chain contains 3 multisubunit complexes succinate dehydrogenase (complex II, CII), ubiquinol-cytochrome c oxidoreductase (cytochrome b-c1 complex, complex III, CIII) and cytochrome c oxidase (complex IV, CIV), that cooperate to transfer electrons derived from NADH and succinate to molecular oxygen, creating an electrochemical gradient over the inner membrane that drives transmembrane transport and the ATP synthase. Cytochrome c oxidase is the component of the respiratory chain that catalyzes the reduction of oxygen to water. Electrons originating from reduced cytochrome c in the intermembrane space (IMS) are transferred via the dinuclear copper A center (CU(A)) of subunit 2 and heme A of subunit 1 to the active site in subunit 1, a binuclear center (BNC) formed by heme A3 and copper B (CU(B)). The BNC reduces molecular oxygen to 2 water molecules using 4 electrons from cytochrome c in the IMS and 4 protons from the mitochondrial matrix. The protein is Cytochrome c oxidase subunit 3 (MT-CO3) of Pan troglodytes (Chimpanzee).